Reading from the N-terminus, the 301-residue chain is Glycine--tRNA ligase alpha subunit (301 aa).

The protein belongs to the class-II aminoacyl-tRNA synthetase family. Tetramer of two alpha and two beta subunits.

It is found in the cytoplasm. It carries out the reaction tRNA(Gly) + glycine + ATP = glycyl-tRNA(Gly) + AMP + diphosphate. This chain is Glycine--tRNA ligase alpha subunit, found in Shewanella piezotolerans (strain WP3 / JCM 13877).